The sequence spans 223 residues: Uracil-DNA glycosylase (223 aa).

Asp-67 (proton acceptor) is an active-site residue.

Belongs to the uracil-DNA glycosylase (UDG) superfamily. UNG family.

Its subcellular location is the cytoplasm. It catalyses the reaction Hydrolyzes single-stranded DNA or mismatched double-stranded DNA and polynucleotides, releasing free uracil.. Excises uracil residues from the DNA which can arise as a result of misincorporation of dUMP residues by DNA polymerase or due to deamination of cytosine. This Borreliella burgdorferi (strain ZS7) (Borrelia burgdorferi) protein is Uracil-DNA glycosylase.